Here is an 89-residue protein sequence, read N- to C-terminus: Small ribosomal subunit protein uS14A (89 aa).

It belongs to the universal ribosomal protein uS14 family. As to quaternary structure, part of the 30S ribosomal subunit. Contacts proteins S3 and S10.

In terms of biological role, binds 16S rRNA, required for the assembly of 30S particles and may also be responsible for determining the conformation of the 16S rRNA at the A site. This Bacillus licheniformis (strain ATCC 14580 / DSM 13 / JCM 2505 / CCUG 7422 / NBRC 12200 / NCIMB 9375 / NCTC 10341 / NRRL NRS-1264 / Gibson 46) protein is Small ribosomal subunit protein uS14A.